Reading from the N-terminus, the 332-residue chain is Putative integrase/recombinase y4rC (332 aa).

Positions 5-98 (ASLAPLLESF…AIHSFFRYAA (94 aa)) constitute a Core-binding (CB) domain. A Tyr recombinase domain is found at 122–307 (TLVNFLTRPE…TLAMKEAALA (186 aa)). Catalysis depends on residues arginine 162, lysine 187, histidine 259, arginine 262, and histidine 285. Tyrosine 294 serves as the catalytic O-(3'-phospho-DNA)-tyrosine intermediate.

It belongs to the 'phage' integrase family.

The polypeptide is Putative integrase/recombinase y4rC (Sinorhizobium fredii (strain NBRC 101917 / NGR234)).